We begin with the raw amino-acid sequence, 238 residues long: Histone deacetylase 7 (238 aa).

Disordered regions lie at residues 1 to 26 and 47 to 72; these read TPGS…PEPA and QQQR…GQQE. An interaction with MEF2A region spans residues 58–158; sequence SMDPPLPELQ…LPTEPPEHFP (101 aa). Phosphoserine is present on residues serine 118 and serine 164. Residues 145 to 238 are disordered; sequence PVPSLPTEPP…NPALGSEADG (94 aa). Residues 176 to 190 are compositionally biased toward basic and acidic residues; the sequence is KSLERRKNPLLRKES. Serine 190 is subject to Phosphoserine; by PKD/PRKD2. Residues 206 to 221 are compositionally biased toward low complexity; sequence SSPSSSSTPASGCSSP.

The protein belongs to the histone deacetylase family. HD type 2 subfamily. In terms of assembly, interacts with HDAC1, HDAC2, HDAC3, HDAC4, HDAC5, NCOR1, NCOR2, SIN3A, SIN3B, RBBP4, RBBP7, MTA1L1, SAP30 and MBD3. Interacts with KAT5 and EDNRA. Interacts with the 14-3-3 protein YWHAE, MEF2A, MEF2B and MEF2C. Interacts with ZMYND15. Interacts with KDM5B. Interacts with PML. Interacts with FOXP3. Interacts with RARA. May be phosphorylated by CaMK1. Phosphorylated by the PKC kinases PKN1 and PKN2, impairing nuclear import. Phosphorylation at Ser-164 by MARK2, MARK3 and PRKD1 promotes interaction with 14-3-3 proteins and export from the nucleus. Phosphorylation at Ser-164 is a prerequisite for phosphorylation at Ser-190.

The protein resides in the nucleus. Its subcellular location is the cytoplasm. The catalysed reaction is N(6)-acetyl-L-lysyl-[histone] + H2O = L-lysyl-[histone] + acetate. It carries out the reaction N(6)-acetyl-L-lysyl-[protein] + H2O = L-lysyl-[protein] + acetate. Its function is as follows. Responsible for the deacetylation of lysine residues on the N-terminal part of the core histones (H2A, H2B, H3 and H4). Histone deacetylation gives a tag for epigenetic repression and plays an important role in transcriptional regulation, cell cycle progression and developmental events. Histone deacetylases act via the formation of large multiprotein complexes. Involved in muscle maturation by repressing transcription of myocyte enhancer factors such as MEF2A, MEF2B and MEF2C. During muscle differentiation, it shuttles into the cytoplasm, allowing the expression of myocyte enhancer factors. May be involved in Epstein-Barr virus (EBV) latency, possibly by repressing the viral BZLF1 gene. Positively regulates the transcriptional repressor activity of FOXP3. Serves as a corepressor of RARA, causing its deacetylation and inhibition of RARE DNA element binding. In association with RARA, plays a role in the repression of microRNA-10a and thereby in the inflammatory response. Also acetylates non-histone proteins, such as ALKBH5. This chain is Histone deacetylase 7 (Hdac7), found in Rattus norvegicus (Rat).